We begin with the raw amino-acid sequence, 819 residues long: Myosin light chain kinase 3 (819 aa).

Disordered regions lie at residues 146–256, 273–334, and 347–462; these read VPWR…TPSE, VVSP…TPPR, and EMLM…EQDC. At Ser152 the chain carries Phosphoserine. 2 stretches are compositionally biased toward basic and acidic residues: residues 158–170 and 183–196; these read EENKERVEEEGGK and DAREPGEESQKADV. Positions 307-318 are enriched in pro residues; the sequence is GPGPQCPGPPGL. A phosphoserine mark is found at Ser355, Ser401, and Ser408. In terms of domain architecture, Protein kinase spans 515–770; that stretch reads VCQHEVLGGG…ATQCLKHEWL (256 aa). ATP is bound by residues 521 to 529 and Lys544; that span reads LGGGRFGQV. Residue Asp636 is the Proton acceptor of the active site.

Belongs to the protein kinase superfamily. CAMK Ser/Thr protein kinase family. Mg(2+) serves as cofactor. Post-translationally, phosphorylated on serine residues. In terms of tissue distribution, restricted to heart.

It is found in the cytoplasm. It catalyses the reaction L-seryl-[myosin light chain] + ATP = O-phospho-L-seryl-[myosin light chain] + ADP + H(+). The catalysed reaction is L-threonyl-[myosin light chain] + ATP = O-phospho-L-threonyl-[myosin light chain] + ADP + H(+). In terms of biological role, kinase that phosphorylates MYL2 in vitro. Promotes sarcomere formation in cardiomyocytes and increases cardiomyocyte contractility. The sequence is that of Myosin light chain kinase 3 (MYLK3) from Homo sapiens (Human).